Reading from the N-terminus, the 355-residue chain is Galactoside 2-alpha-L-fucosyltransferase (355 aa).

Over 1 to 15 the chain is Cytoplasmic; that stretch reads MRNVKGLFSYMTKTK. The helical; Signal-anchor for type II membrane protein transmembrane segment at 16 to 36 threads the bilayer; that stretch reads SFYISIIVIIFIIFIVNRMGP. Residues 37-355 are Lumenal-facing; sequence RNYNYKQIGT…MSRNGSIISK (319 aa). N-linked (GlcNAc...) asparagine glycans are attached at residues N92, N311, and N349.

Belongs to the glycosyltransferase 11 family. As to expression, expression is restricted to the 20 intestinal cells in larvae and adult.

It localises to the golgi apparatus. The protein resides in the golgi stack membrane. The protein operates within protein modification; protein glycosylation. Its function is as follows. Selectively catalyzes the addition of fucose in alpha 1-2 linkage to Gal-beta-(1-&gt;4)-Xyl-beta-R, Gal-beta-(1-&gt;6)-GlcNAc-R, Gal-beta-(1-&gt;3)-Gal-beta-(1-&gt;4)-Glc and Gal-beta-(1-&gt;3)-Gal-beta-(1-&gt;4)-Xyl-R acceptors but not Gal-beta-(1-&gt;3)-GlcNAc-beta-(1-&gt;3)-Gal-beta-(1-&gt;4)-Glc. Unlike in mammals, unable to fucosylate Gal-beta-(1-&gt;4)-Glc-beta-R. The protein is Galactoside 2-alpha-L-fucosyltransferase of Caenorhabditis elegans.